The primary structure comprises 212 residues: Imidazole glycerol phosphate synthase subunit HisH (212 aa).

The 211-residue stretch at 1–211 folds into the Glutamine amidotransferase type-1 domain; that stretch reads MIGVIDYGMG…KQFTQEQKVK (211 aa). The active-site Nucleophile is the C79. Catalysis depends on residues H186 and E188.

As to quaternary structure, heterodimer of HisH and HisF.

The protein localises to the cytoplasm. It carries out the reaction 5-[(5-phospho-1-deoxy-D-ribulos-1-ylimino)methylamino]-1-(5-phospho-beta-D-ribosyl)imidazole-4-carboxamide + L-glutamine = D-erythro-1-(imidazol-4-yl)glycerol 3-phosphate + 5-amino-1-(5-phospho-beta-D-ribosyl)imidazole-4-carboxamide + L-glutamate + H(+). The enzyme catalyses L-glutamine + H2O = L-glutamate + NH4(+). Its pathway is amino-acid biosynthesis; L-histidine biosynthesis; L-histidine from 5-phospho-alpha-D-ribose 1-diphosphate: step 5/9. Functionally, IGPS catalyzes the conversion of PRFAR and glutamine to IGP, AICAR and glutamate. The HisH subunit catalyzes the hydrolysis of glutamine to glutamate and ammonia as part of the synthesis of IGP and AICAR. The resulting ammonia molecule is channeled to the active site of HisF. The protein is Imidazole glycerol phosphate synthase subunit HisH of Bacillus licheniformis (strain ATCC 14580 / DSM 13 / JCM 2505 / CCUG 7422 / NBRC 12200 / NCIMB 9375 / NCTC 10341 / NRRL NRS-1264 / Gibson 46).